Consider the following 359-residue polypeptide: Heat-inducible transcription repressor HrcA (359 aa).

Belongs to the HrcA family.

Functionally, negative regulator of class I heat shock genes (grpE-dnaK-dnaJ and groELS operons). Prevents heat-shock induction of these operons. This chain is Heat-inducible transcription repressor HrcA, found in Roseiflexus castenholzii (strain DSM 13941 / HLO8).